The sequence spans 220 residues: Tumor protein D54 (220 aa).

Residue M1 is modified to N-acetylmethionine. Polar residues predominate over residues 1–14 (MDSASQDINLNSPN). The segment at 1 to 26 (MDSASQDINLNSPNKGVLSDFMTDVP) is disordered. A phosphoserine mark is found at S3, S12, and S19. Residues 40–82 (GLTEVEEEELRAELAKVEEEIVTLRQVLAAKERHCGELKRRLG) adopt a coiled-coil conformation. Phosphoserine occurs at positions 96, 149, 168, and 175. T177 bears the Phosphothreonine mark. S180 bears the Phosphoserine mark. The residue at position 187 (T187) is a Phosphothreonine. A disordered region spans residues 189–220 (KSKVVGGRENGSDTLPSSPGSGDQTLPDHAPF). A compositionally biased stretch (polar residues) spans 200–212 (SDTLPSSPGSGDQ). 2 positions are modified to phosphoserine: S206 and S209.

It belongs to the TPD52 family. Forms a homodimer or heterodimer with other members of the family. Interacts with MAL2.

The protein is Tumor protein D54 (Tpd52l2) of Rattus norvegicus (Rat).